The chain runs to 319 residues: Inositol-tetrakisphosphate 1-kinase 1 (319 aa).

S2 carries the N-acetylserine modification. K18 and K60 together coordinate 1D-myo-inositol 1,3,4-trisphosphate. The ATP site is built by R95 and K145. Positions L99–H318 constitute an ATP-grasp domain. 1D-myo-inositol 1,3,4-trisphosphate contacts are provided by H156 and K188. Residues Q177–K188 and S203 contribute to the ATP site. Mg(2+) contacts are provided by D273, D288, and N290. 1D-myo-inositol 1,3,4-trisphosphate is bound at residue N290.

This sequence belongs to the ITPK1 family. As to quaternary structure, monomer. The cofactor is Mg(2+). Expressed in siliques.

It carries out the reaction 1D-myo-inositol 3,4,5,6-tetrakisphosphate + ATP = 1D-myo-inositol 1,3,4,5,6-pentakisphosphate + ADP + H(+). The enzyme catalyses 1D-myo-inositol 1,3,4-trisphosphate + ATP = 1D-myo-inositol 1,3,4,5-tetrakisphosphate + ADP + H(+). The catalysed reaction is 1D-myo-inositol 1,3,4-trisphosphate + ATP = 1D-myo-inositol 1,3,4,6-tetrakisphosphate + ADP + H(+). Its function is as follows. Kinase that can phosphorylate various inositol polyphosphate such as Ins(3,4,5,6)P4 or Ins(1,3,4)P3. Phosphorylates Ins(3,4,5,6)P4 at position 1 to form Ins(1,3,4,5,6)P5. This reaction is thought to have regulatory importance, since Ins(3,4,5,6)P4 is an inhibitor of plasma membrane Ca(2+)-activated Cl(-) channels, while Ins(1,3,4,5,6)P5 is not. Also phosphorylates Ins(1,3,4)P3 on O-5 and O-6 to form Ins(1,3,4,6)P4, an essential molecule in the hexakisphosphate (InsP6) pathway. In Arabidopsis thaliana (Mouse-ear cress), this protein is Inositol-tetrakisphosphate 1-kinase 1 (ITPK1).